A 73-amino-acid chain; its full sequence is DNA-directed RNA polymerase subunit omega (73 aa).

This sequence belongs to the RNA polymerase subunit omega family. As to quaternary structure, the RNAP catalytic core consists of 2 alpha, 1 beta, 1 beta' and 1 omega subunit. When a sigma factor is associated with the core the holoenzyme is formed, which can initiate transcription.

It carries out the reaction RNA(n) + a ribonucleoside 5'-triphosphate = RNA(n+1) + diphosphate. Its function is as follows. Promotes RNA polymerase assembly. Latches the N- and C-terminal regions of the beta' subunit thereby facilitating its interaction with the beta and alpha subunits. The sequence is that of DNA-directed RNA polymerase subunit omega from Lactobacillus delbrueckii subsp. bulgaricus (strain ATCC BAA-365 / Lb-18).